A 262-amino-acid polypeptide reads, in one-letter code: MAPALLLVPAALASFILAFGTGVEFVRFTSLRPLLGGIPESGGPDARQGWLAALQDQSILVPLAWDLGLLLLFVGQHSLMATETVKAWMSRYFGVLQRSLYVACTALALQLVMRYWEPVPRGPVLWEAQAEPWATWVPLLCFVLHVISWLLIFSILLVFDYAELMGLKQVYYHVLGLGEPLALKSPRALRLFSHLRHPVCVELLTVLWVVPTLGTDRLLLALLLTLYLGLAHGLDQQDLRYLRAQLQRKLHLLSRPQDGEAE.

Over 1 to 4 the chain is Nuclear; it reads MAPA. A helical membrane pass occupies residues 5 to 28; it reads LLLVPAALASFILAFGTGVEFVRF. At 29–58 the chain is on the perinuclear space side; sequence TSLRPLLGGIPESGGPDARQGWLAALQDQS. A helical transmembrane segment spans residues 59–80; sequence ILVPLAWDLGLLLLFVGQHSLM. The Nuclear segment spans residues 81–97; sequence ATETVKAWMSRYFGVLQ. The chain crosses the membrane as a helical span at residues 98-114; sequence RSLYVACTALALQLVMR. Residues 115-133 are Perinuclear space-facing; it reads YWEPVPRGPVLWEAQAEPW. A helical transmembrane segment spans residues 134 to 164; the sequence is ATWVPLLCFVLHVISWLLIFSILLVFDYAEL. Residues 165–191 lie on the Nuclear side of the membrane; that stretch reads MGLKQVYYHVLGLGEPLALKSPRALRL. A helical membrane pass occupies residues 192 to 210; the sequence is FSHLRHPVCVELLTVLWVV. Topologically, residues 211-216 are perinuclear space; the sequence is PTLGTD. The chain crosses the membrane as a helical span at residues 217–234; that stretch reads RLLLALLLTLYLGLAHGL. Topologically, residues 235–262 are nuclear; sequence DQQDLRYLRAQLQRKLHLLSRPQDGEAE.

Belongs to the nurim family.

It is found in the nucleus inner membrane. The sequence is that of Nurim (NRM) from Sus scrofa (Pig).